The sequence spans 150 residues: MKLNELFAGLPKRRRLKVLGRGLGCGKGKTSGRGHKGQKARSGCAVNGFEGGQQPIFTRLPKRGFRSMSRARYEIVNIGALQRLISEKKIVDASNISKELMAELGMIPSPMSKVKILGKGALKAKVGISYDAVSKAAWEESLLTEGLSDS.

This sequence belongs to the universal ribosomal protein uL15 family. In terms of assembly, part of the 50S ribosomal subunit.

Binds to the 23S rRNA. The protein is Large ribosomal subunit protein uL15 of Anaplasma marginale (strain Florida).